The primary structure comprises 425 residues: MKPMHIAMALLSAAMFFVLAGVFMGVQLELDGTKLVVDTASDVRWQWVFIGTAVVFFFQLLRPAFQKGLKSVSGPKFILPAIDGSTVKQKLFLVALLVLAVAWPFMVSRGTVDIATLTMIYIILGLGLNVVVGLSGLLVLGYGGFYAIGAYTFALLNHYYGLGFWTCLPIAGLMAAAAGFLLGFPVLRLRGDYLAIVTLGFGEIVRILLLNNTEITGGPNGISQIPKPTLFGLEFSRTAREGGWDTFSNFFGLKYDPSDRVIFLYLVALLLVVLSLFVINRLLRMPLGRAWEALREDEIACRSLGLSPRRIKLTAFTISAAFAGFAGTLFAARQGFVSPESFTFAESAFVLAIVVLGGMGSQFAVILAAILLVVSRELMRDFNEYSMLMLGGLMVLMMIWRPQGLLPMTRPQLKLKNGAAKGEQA.

11 helical membrane-spanning segments follow: residues 6–26, 45–65, 92–112, 120–140, 145–165, 167–187, 191–211, 260–280, 311–331, 353–373, and 387–407; these read IAMA…FMGV, WQWV…RPAF, FLVA…RGTV, IYII…LLVL, FYAI…LGFW, CLPI…FPVL, GDYL…LLLN, RVIF…FVIN, IKLT…TLFA, IVVL…ILLV, and MLML…GLLP.

Belongs to the binding-protein-dependent transport system permease family. LivHM subfamily.

It localises to the cell inner membrane. Its function is as follows. Part of the binding-protein-dependent transport system for branched-chain amino acids. Probably responsible for the translocation of the substrates across the membrane. This chain is High-affinity branched-chain amino acid transport system permease protein LivM (livM), found in Escherichia coli (strain K12).